The primary structure comprises 284 residues: Putative xyloglucan endotransglucosylase/hydrolase protein 13 (284 aa).

An N-terminal signal peptide occupies residues 1–24 (MAAFTTKQSLLLLSLLLLISLSAG). Positions 25 to 214 (SFYDNFDITW…WTNAPFSASY (190 aa)) constitute a GH16 domain. The active-site Nucleophile is E100. The Proton donor role is filled by E104. E104 is a xyloglucan binding site. A glycan (N-linked (GlcNAc...) asparagine) is linked at N108. Xyloglucan is bound by residues 117 to 119 (HTN), 127 to 129 (NRE), 193 to 194 (DW), and G198. 2 cysteine pairs are disulfide-bonded: C223/C234 and C267/C281. Position 272 (R272) interacts with xyloglucan.

It belongs to the glycosyl hydrolase 16 family. XTH group 2 subfamily. In terms of processing, contains at least one intrachain disulfide bond essential for its enzymatic activity.

It localises to the secreted. The protein localises to the cell wall. Its subcellular location is the extracellular space. The protein resides in the apoplast. It carries out the reaction breaks a beta-(1-&gt;4) bond in the backbone of a xyloglucan and transfers the xyloglucanyl segment on to O-4 of the non-reducing terminal glucose residue of an acceptor, which can be a xyloglucan or an oligosaccharide of xyloglucan.. Functionally, may catalyze xyloglucan endohydrolysis (XEH) and/or endotransglycosylation (XET). Cleaves and religates xyloglucan polymers, an essential constituent of the primary cell wall, and thereby participates in cell wall construction of growing tissues. The chain is Putative xyloglucan endotransglucosylase/hydrolase protein 13 (XTH13) from Arabidopsis thaliana (Mouse-ear cress).